The sequence spans 284 residues: uncharacterized protein (284 aa).

A C3H1-type zinc finger spans residues 37-65 (NEKKLICFSIINGENCIYGPNCTYAHSLS).

This is an uncharacterized protein from Acanthamoeba polyphaga (Amoeba).